A 428-amino-acid polypeptide reads, in one-letter code: Light-independent protochlorophyllide reductase subunit N (428 aa).

3 residues coordinate [4Fe-4S] cluster: cysteine 31, cysteine 56, and cysteine 117.

It belongs to the BchN/ChlN family. As to quaternary structure, protochlorophyllide reductase is composed of three subunits; BchL, BchN and BchB. Forms a heterotetramer of two BchB and two BchN subunits. It depends on [4Fe-4S] cluster as a cofactor.

The catalysed reaction is chlorophyllide a + oxidized 2[4Fe-4S]-[ferredoxin] + 2 ADP + 2 phosphate = protochlorophyllide a + reduced 2[4Fe-4S]-[ferredoxin] + 2 ATP + 2 H2O. It participates in porphyrin-containing compound metabolism; bacteriochlorophyll biosynthesis (light-independent). Its function is as follows. Component of the dark-operative protochlorophyllide reductase (DPOR) that uses Mg-ATP and reduced ferredoxin to reduce ring D of protochlorophyllide (Pchlide) to form chlorophyllide a (Chlide). This reaction is light-independent. The NB-protein (BchN-BchB) is the catalytic component of the complex. The protein is Light-independent protochlorophyllide reductase subunit N of Rhodopseudomonas palustris (strain HaA2).